The primary structure comprises 338 residues: DNA polymerase III subunit delta (338 aa).

This sequence belongs to the DNA polymerase HolA subunit family. In terms of assembly, DNA polymerase III contains a core (composed of alpha, epsilon and theta chains) that associates with a tau subunit. This core dimerizes to form the POLIII' complex. PolIII' associates with the gamma complex (composed of gamma, delta, delta', psi and chi chains) and with the beta chain to form the complete DNA polymerase III complex.

The enzyme catalyses DNA(n) + a 2'-deoxyribonucleoside 5'-triphosphate = DNA(n+1) + diphosphate. In terms of biological role, DNA polymerase III is a complex, multichain enzyme responsible for most of the replicative synthesis in bacteria. This DNA polymerase also exhibits 3' to 5' exonuclease activity. The delta subunit seems to interact with the gamma subunit to transfer the beta subunit on the DNA. In Buchnera aphidicola subsp. Schizaphis graminum (strain Sg), this protein is DNA polymerase III subunit delta (holA).